Consider the following 323-residue polypeptide: Ribose-phosphate pyrophosphokinase 2 (323 aa).

Residues 43–45 (DGE) and 102–103 (RQ) contribute to the ATP site. 2 residues coordinate Mg(2+): His-136 and Asp-177. Lys-200 is an active-site residue. D-ribose 5-phosphate contacts are provided by residues Arg-202, Asp-226, and 230–234 (DTAGT).

Belongs to the ribose-phosphate pyrophosphokinase family. Class I subfamily. In terms of assembly, homohexamer. Mg(2+) serves as cofactor.

The protein resides in the cytoplasm. The catalysed reaction is D-ribose 5-phosphate + ATP = 5-phospho-alpha-D-ribose 1-diphosphate + AMP + H(+). It functions in the pathway metabolic intermediate biosynthesis; 5-phospho-alpha-D-ribose 1-diphosphate biosynthesis; 5-phospho-alpha-D-ribose 1-diphosphate from D-ribose 5-phosphate (route I): step 1/1. Involved in the biosynthesis of the central metabolite phospho-alpha-D-ribosyl-1-pyrophosphate (PRPP) via the transfer of pyrophosphoryl group from ATP to 1-hydroxyl of ribose-5-phosphate (Rib-5-P). In Enterococcus faecalis (strain ATCC 700802 / V583), this protein is Ribose-phosphate pyrophosphokinase 2.